The primary structure comprises 442 residues: MFS transporter asaE (442 aa).

The span at 1–10 shows a compositional bias: polar residues; that stretch reads MDRSRTSSQG. Residues 1–43 are disordered; it reads MDRSRTSSQGRDVLPPRGDEGRISPSLDKEKSPGPEDQPDAPP. Residues 17–34 show a composition bias toward basic and acidic residues; sequence RGDEGRISPSLDKEKSPG. A run of 12 helical transmembrane segments spans residues 47 to 67, 89 to 109, 119 to 139, 150 to 170, 177 to 197, 206 to 226, 252 to 272, 288 to 307, 319 to 339, 342 to 362, 381 to 401, and 413 to 433; these read LTAWLVVVGAWCTSFCSFGWV, TISWIPSLQIFFMFAMGPIVG, YLIIGGTFFHVFGLMMASIST, ICSAIGAAAIFQPALSAVSAW, IAFATLSTGSSVGGVIFPIMV, FGWSMRISAFMILFLLGIAIV, PVFIVTLLGYMLLTYGVFIPI, LASYLVPMLNGASLFGRLGA, IFIVMCIVAGVLVLALWIPAT, APIIVFATLFGFASGAYVSLS, LLFLFASVGGLTTSPIAGAIL, and IFSGVMLLGGTAFIITARIVG.

Belongs to the major facilitator superfamily. Monocarboxylate porter (TC 2.A.1.13) family.

Its subcellular location is the cell membrane. It functions in the pathway secondary metabolite biosynthesis. Its function is as follows. MFS transporter; part of the gene cluster that mediates the biosynthesis of aspergillic acid. Probably involved in aspergillic acid metabolism and transport. In Aspergillus flavus (strain ATCC 200026 / FGSC A1120 / IAM 13836 / NRRL 3357 / JCM 12722 / SRRC 167), this protein is MFS transporter asaE.